The chain runs to 642 residues: Capsid vertex component 2 (642 aa).

The tract at residues 1-48 (MSLLHTFWRLPVAVFFEPHEENVLRCPERVLRRLLEDAAVTMRGGGWR) is interaction with major capsid protein/MCP. The interval 97–125 (DEGPSPRTLLQPPCRPRSSSPGTGVAGAS) is disordered.

Belongs to the herpesviridae CVC2 protein family. Heterodimerizes with CVC1. Interacts with major capsid protein/MCP and triplex capsid protein 1/TRX1 at the pentamer vertices. Interacts with the large tegument protein/LTP.

The protein resides in the virion. It localises to the host nucleus. Functionally, capsid vertex-specific component that plays a role during viral DNA encapsidation, assuring correct genome cleavage and presumably stabilizing capsids that contain full-length viral genomes. Participates in the interaction between the capsid and the tegument through interaction with the large tegument protein/LTP. The chain is Capsid vertex component 2 from Homo sapiens (Human).